A 326-amino-acid polypeptide reads, in one-letter code: Nuclear egress protein 1 (326 aa).

The CCCH-type zinc-finger motif lies at Cys-115 to His-244.

It belongs to the herpesviridae NEC1 protein family. In terms of assembly, forms a heterohexameric complex with NEC2. Interacts with capsid vertex specific component 2/CVC2; this interaction directs the capsid to the host inner nuclear membrane to initiate budding. Post-translationally, phosphorylated at serine residues in the N-terminus. This phosphorylation regulates the localization within the inner nuclear membrane.

Its subcellular location is the host nucleus inner membrane. Functionally, plays an essential role in virion nuclear egress, the first step of virion release from infected cell. Within the host nucleus, NEC1 interacts with the newly formed capsid through the vertexes and directs it to the inner nuclear membrane by associating with NEC2. Induces the budding of the capsid at the inner nuclear membrane as well as its envelopment into the perinuclear space. There, the NEC1/NEC2 complex promotes the fusion of the enveloped capsid with the outer nuclear membrane and the subsequent release of the viral capsid into the cytoplasm where it will reach the secondary budding sites in the host Golgi or trans-Golgi network. This chain is Nuclear egress protein 1, found in Equine herpesvirus 1 (strain Ab4p) (EHV-1).